Consider the following 328-residue polypeptide: Cysteine proteinase COT44 (328 aa).

Positions 1–99 (MSIYLRWSLE…KYSAAVNVDE (99 aa)) are cleaved as a propeptide — activation peptide. Residues N48 and N60 are each glycosylated (N-linked (GlcNAc...) asparagine). Cystine bridges form between C121/C163, C155/C196, and C254/C305. C124 is an active-site residue. Active-site residues include H260 and N280.

The protein belongs to the peptidase C1 family. In terms of tissue distribution, present in both cotyledons and axes.

In terms of biological role, may function in an early event in cortical cell differentiation. The chain is Cysteine proteinase COT44 from Brassica napus (Rape).